We begin with the raw amino-acid sequence, 299 residues long: tRNA dimethylallyltransferase (299 aa).

ATP is bound at residue 13–20 (GPTASGKT). 15 to 20 (TASGKT) is a substrate binding site. The interaction with substrate tRNA stretch occupies residues 38 to 41 (DSRQ).

Belongs to the IPP transferase family. In terms of assembly, monomer. Mg(2+) serves as cofactor.

The catalysed reaction is adenosine(37) in tRNA + dimethylallyl diphosphate = N(6)-dimethylallyladenosine(37) in tRNA + diphosphate. In terms of biological role, catalyzes the transfer of a dimethylallyl group onto the adenine at position 37 in tRNAs that read codons beginning with uridine, leading to the formation of N6-(dimethylallyl)adenosine (i(6)A). In Prochlorococcus marinus (strain MIT 9301), this protein is tRNA dimethylallyltransferase.